Here is a 154-residue protein sequence, read N- to C-terminus: PTS system glucose-specific EIIA component (154 aa).

The PTS EIIA type-1 domain occupies 26-130 (DEVFKERMLG…SIKSPIIFTN (105 aa)). Zn(2+) is bound by residues His63 and His78. His78 acts as the Tele-phosphohistidine intermediate; for EIIA activity in catalysis. Position 78 is a phosphohistidine; by HPr (His78).

As to quaternary structure, heterodimer with glycerol kinase (glpk). Zn(2+) serves as cofactor.

Its subcellular location is the cytoplasm. Its function is as follows. The phosphoenolpyruvate-dependent sugar phosphotransferase system (sugar PTS), a major carbohydrate active transport system, catalyzes the phosphorylation of incoming sugar substrates concomitantly with their translocation across the cell membrane. The enzyme II complex composed of PtsG and Crr is involved in glucose transport. This is PTS system glucose-specific EIIA component (crr) from Mycoplasma capricolum subsp. capricolum (strain California kid / ATCC 27343 / NCTC 10154).